A 113-amino-acid chain; its full sequence is Large ribosomal subunit protein uL22 (113 aa).

Belongs to the universal ribosomal protein uL22 family. As to quaternary structure, part of the 50S ribosomal subunit.

Its function is as follows. This protein binds specifically to 23S rRNA; its binding is stimulated by other ribosomal proteins, e.g. L4, L17, and L20. It is important during the early stages of 50S assembly. It makes multiple contacts with different domains of the 23S rRNA in the assembled 50S subunit and ribosome. The globular domain of the protein is located near the polypeptide exit tunnel on the outside of the subunit, while an extended beta-hairpin is found that lines the wall of the exit tunnel in the center of the 70S ribosome. This chain is Large ribosomal subunit protein uL22, found in Bacillus mycoides (strain KBAB4) (Bacillus weihenstephanensis).